The following is a 456-amino-acid chain: Bifunctional protein GlmU (456 aa).

The segment at 1–229 (MLNNAMSVVI…LSEVEGVNNR (229 aa)) is pyrophosphorylase. Residues 11–14 (LAAG), Lys25, Gln76, 81–82 (GT), 103–105 (YGD), Gly140, Glu154, Asn169, and Asn227 each bind UDP-N-acetyl-alpha-D-glucosamine. Mg(2+) is bound at residue Asp105. A Mg(2+)-binding site is contributed by Asn227. The linker stretch occupies residues 230–250 (LQLSRLERVYQSEQAEKLLLA). The tract at residues 251–456 (GVMLRDPARF…EGWRRPVKKK (206 aa)) is N-acetyltransferase. Residues Arg333 and Lys351 each contribute to the UDP-N-acetyl-alpha-D-glucosamine site. His363 acts as the Proton acceptor in catalysis. UDP-N-acetyl-alpha-D-glucosamine contacts are provided by Tyr366 and Asn377. Residues Ala380, 386–387 (NY), Ser405, Ala423, and Arg440 contribute to the acetyl-CoA site.

The protein in the N-terminal section; belongs to the N-acetylglucosamine-1-phosphate uridyltransferase family. In the C-terminal section; belongs to the transferase hexapeptide repeat family. As to quaternary structure, homotrimer. Mg(2+) serves as cofactor.

The protein localises to the cytoplasm. The enzyme catalyses alpha-D-glucosamine 1-phosphate + acetyl-CoA = N-acetyl-alpha-D-glucosamine 1-phosphate + CoA + H(+). The catalysed reaction is N-acetyl-alpha-D-glucosamine 1-phosphate + UTP + H(+) = UDP-N-acetyl-alpha-D-glucosamine + diphosphate. The protein operates within nucleotide-sugar biosynthesis; UDP-N-acetyl-alpha-D-glucosamine biosynthesis; N-acetyl-alpha-D-glucosamine 1-phosphate from alpha-D-glucosamine 6-phosphate (route II): step 2/2. Its pathway is nucleotide-sugar biosynthesis; UDP-N-acetyl-alpha-D-glucosamine biosynthesis; UDP-N-acetyl-alpha-D-glucosamine from N-acetyl-alpha-D-glucosamine 1-phosphate: step 1/1. It participates in bacterial outer membrane biogenesis; LPS lipid A biosynthesis. Catalyzes the last two sequential reactions in the de novo biosynthetic pathway for UDP-N-acetylglucosamine (UDP-GlcNAc). The C-terminal domain catalyzes the transfer of acetyl group from acetyl coenzyme A to glucosamine-1-phosphate (GlcN-1-P) to produce N-acetylglucosamine-1-phosphate (GlcNAc-1-P), which is converted into UDP-GlcNAc by the transfer of uridine 5-monophosphate (from uridine 5-triphosphate), a reaction catalyzed by the N-terminal domain. The polypeptide is Bifunctional protein GlmU (Escherichia coli O8 (strain IAI1)).